The primary structure comprises 271 residues: MLKIGVIGCGFIGGQICRAIDKGVINAELYALSDSSESKVLELTTCLKRYSPASMTIEELLQNVDFVIESASQKAVRLIVPQALEAGRDVMVMSVGALADEELRKRLFRLAEQNNCKLYFPSGAVAGIDGINSASAAEILSVTLTTRKPPMGLAGAPHVEALGIELETIEKETLLFEGPASEAVKAFPANVNVAATISLAGIGFERTKVRVIADPTLSRNVHEITVEGEFGKLSTRVENLPSPENPKTSYLAALSAISTLKKILSPVQIGT.

The NAD(+) site is built by Ala124 and Asn192. Residue His222 is part of the active site.

The protein belongs to the L-aspartate dehydrogenase family.

The catalysed reaction is L-aspartate + NADP(+) + H2O = oxaloacetate + NH4(+) + NADPH + H(+). It catalyses the reaction L-aspartate + NAD(+) + H2O = oxaloacetate + NH4(+) + NADH + H(+). Its pathway is cofactor biosynthesis; NAD(+) biosynthesis; iminoaspartate from L-aspartate (dehydrogenase route): step 1/1. Specifically catalyzes the NAD or NADP-dependent dehydrogenation of L-aspartate to iminoaspartate. This is L-aspartate dehydrogenase from Methanosarcina barkeri (strain Fusaro / DSM 804).